Consider the following 778-residue polypeptide: DISP complex protein LRCH3 (778 aa).

10 LRR repeats span residues 56 to 79 (AAVT…AANH), 81 to 104 (LTDT…ACHF), 105 to 127 (VSLE…VLNL), 128 to 150 (QALT…LCNL), 152 to 172 (LKVL…IGHL), 173 to 195 (RHLT…IGNL), 197 to 218 (ALRD…LAEV), 220 to 239 (LIRL…CYRN), 240 to 264 (LRHL…CIKG), and 266 to 290 (IHIF…ERRP). Residues 56–290 (AAVTGVLSLS…PDLPDYERRP (235 aa)) form a mediates interaction with DOCK7 region. 3 positions are modified to phosphoserine: Ser324, Ser415, and Ser419. A mediates direct interaction with MYO6 region spans residues 382-642 (TTEEEENDVK…PATDPTDAIT (261 aa)). The disordered stretch occupies residues 511–536 (QKASHNPQRQQPPGNGECSFPSRRSQ). Residues 514 to 523 (SHNPQRQQPP) are compositionally biased toward polar residues. A phosphoserine mark is found at Ser608 and Ser625. The Calponin-homology (CH) domain maps to 645-758 (REEELKLIDQ…VTVQALLELA (114 aa)). Residues 758–778 (APPKQPPPQQPQQQQPQLSAV) form a disordered region. Over residues 768-778 (PQQQQPQLSAV) the composition is skewed to low complexity.

As to quaternary structure, component of the DOCK7-induced septin displacement/DISP complex, at least composed of DOCK7, LRCH3 and MYO6.

It localises to the cytoplasm. In terms of biological role, as part of the DISP complex, may regulate the association of septins with actin and thereby regulate the actin cytoskeleton. The polypeptide is DISP complex protein LRCH3 (Mus musculus (Mouse)).